Consider the following 386-residue polypeptide: Formate-dependent phosphoribosylglycinamide formyltransferase (386 aa).

N(1)-(5-phospho-beta-D-ribosyl)glycinamide contacts are provided by residues 15 to 16 (EL) and glutamate 75. ATP is bound by residues arginine 107, lysine 148, 153–158 (SSGKGQ), 188–191 (EQFI), and glutamate 196. The 190-residue stretch at 112–301 (ALAVQQLNLQ…EFELHLRAIV (190 aa)) folds into the ATP-grasp domain. Positions 260 and 272 each coordinate Mg(2+). N(1)-(5-phospho-beta-D-ribosyl)glycinamide contacts are provided by residues aspartate 279, lysine 349, and 356–357 (RR).

This sequence belongs to the PurK/PurT family. In terms of assembly, homodimer.

The catalysed reaction is N(1)-(5-phospho-beta-D-ribosyl)glycinamide + formate + ATP = N(2)-formyl-N(1)-(5-phospho-beta-D-ribosyl)glycinamide + ADP + phosphate + H(+). It participates in purine metabolism; IMP biosynthesis via de novo pathway; N(2)-formyl-N(1)-(5-phospho-D-ribosyl)glycinamide from N(1)-(5-phospho-D-ribosyl)glycinamide (formate route): step 1/1. Functionally, involved in the de novo purine biosynthesis. Catalyzes the transfer of formate to 5-phospho-ribosyl-glycinamide (GAR), producing 5-phospho-ribosyl-N-formylglycinamide (FGAR). Formate is provided by PurU via hydrolysis of 10-formyl-tetrahydrofolate. The sequence is that of Formate-dependent phosphoribosylglycinamide formyltransferase from Francisella tularensis subsp. holarctica (strain LVS).